Reading from the N-terminus, the 2193-residue chain is Genome polyprotein (2193 aa).

Residues 1–22 (MGSQVSTQRSGSHENSNSATEG) are disordered. A lipid anchor (N-myristoyl glycine; by host) is attached at glycine 2. The Cytoplasmic portion of the chain corresponds to 2–1503 (GSQVSTQRSG…HLNRAVLVMQ (1502 aa)). Positions 568–588 (RVADVIESSIGDSVSRALTQA) are amphipathic alpha-helix. Catalysis depends on for protease 2A activity residues histidine 883 and aspartate 901. Zn(2+) contacts are provided by cysteine 918 and cysteine 920. Cysteine 972 functions as the For protease 2A activity in the catalytic mechanism. Zn(2+) is bound by residues cysteine 978 and histidine 980. An SF3 helicase domain is found at 1216–1374 (EKRMNNYMQF…SKTDLGRLDA (159 aa)). 1240 to 1247 (GSPGTGKS) contributes to the ATP binding site. Zn(2+) contacts are provided by cysteine 1381, cysteine 1392, and cysteine 1397. The segment at 1381–1397 (CSENNTANFKRCSPLVC) adopts a C4-type; degenerate zinc-finger fold. The stretch at 1504–1519 (SIATVVAVVSLVYVIY) is an intramembrane region. At 1520–2193 (KLFAGFQGAY…NLRRNWLELF (674 aa)) the chain is on the cytoplasmic side. An O-(5'-phospho-RNA)-tyrosine modification is found at tyrosine 1529. Residues 1549-1727 (GPSLDFALSL…FCAGLKRSYF (179 aa)) form the Peptidase C3 domain. Active-site for protease 3C activity residues include histidine 1588, glutamate 1619, and cysteine 1695. The 116-residue stretch at 1958 to 2073 (GSLFAFDYSG…ASYPFPIDCL (116 aa)) folds into the RdRp catalytic domain. Mg(2+) is bound by residues aspartate 1964 and aspartate 2060.

The protein belongs to the picornaviruses polyprotein family. In terms of assembly, interacts with capsid protein VP1 and capsid protein VP3 to form heterotrimeric protomers. As to quaternary structure, interacts with capsid protein VP0, and capsid protein VP3 to form heterotrimeric protomers. Five protomers subsequently associate to form pentamers which serve as building blocks for the capsid. Interacts with capsid protein VP2, capsid protein VP3 and capsid protein VP4 following cleavage of capsid protein VP0. Interacts with host SCARB2. Interacts with host ARF6; this interaction mediates viral endocytosis. Interacts with capsid protein VP1 and capsid protein VP3 in the mature capsid. Interacts with host SCARB2. In terms of assembly, interacts with capsid protein VP0 and capsid protein VP1 to form heterotrimeric protomers. Five protomers subsequently associate to form pentamers which serve as building blocks for the capsid. Interacts with capsid protein VP4 in the mature capsid. Interacts with protein 2C; this interaction may be important for virion morphogenesis. As to quaternary structure, interacts with capsid protein VP1 and capsid protein VP3. Homodimer. In terms of assembly, interacts with host BAX; this interaction activates the mitochondrial apoptotic pathway. Interacts with host ILF2. As to quaternary structure, homohexamer; forms a hexameric ring structure with 6-fold symmetry characteristic of AAA+ ATPases. Interacts (via N-terminus) with host RTN3 (via reticulon domain); this interaction is important for viral replication. Interacts with capsid protein VP3; this interaction may be important for virion morphogenesis. Interacts with protein 3CD. In terms of assembly, homodimer. Interacts with host GBF1. Interacts (via GOLD domain) with host ACBD3 (via GOLD domain); this interaction allows the formation of a viral protein 3A/ACBD3 heterotetramer with a 2:2 stoichiometry, which will stimulate the recruitment of host PI4KB in order to synthesize PI4P at the viral RNA replication sites. As to quaternary structure, interacts with RNA-directed RNA polymerase. Interacts with host IFIH1/MDA5; this interaction inhibits host IFIH1. In terms of assembly, interacts with protein 3AB and with RNA-directed RNA polymerase. As to quaternary structure, interacts with Viral protein genome-linked and with protein 3CD. It depends on Mg(2+) as a cofactor. Specific enzymatic cleavages in vivo by the viral proteases yield processing intermediates and the mature proteins. In terms of processing, myristoylation is required for the formation of pentamers during virus assembly. Further assembly of 12 pentamers and a molecule of genomic RNA generates the provirion. Post-translationally, during virion maturation, immature virions are rendered infectious following cleavage of VP0 into VP4 and VP2. This maturation seems to be an autocatalytic event triggered by the presence of RNA in the capsid and it is followed by a conformational change infectious virion. Myristoylation is required during RNA encapsidation and formation of the mature virus particle. In terms of processing, VPg is uridylylated by the polymerase into VPg-pUpU. This acts as a nucleotide-peptide primer for the genomic RNA replication.

The protein localises to the virion. The protein resides in the host cytoplasm. Its subcellular location is the host cytoplasmic vesicle membrane. It localises to the host nucleus. It catalyses the reaction a ribonucleoside 5'-triphosphate + H2O = a ribonucleoside 5'-diphosphate + phosphate + H(+). The enzyme catalyses Selective cleavage of Tyr-|-Gly bond in the picornavirus polyprotein.. The catalysed reaction is RNA(n) + a ribonucleoside 5'-triphosphate = RNA(n+1) + diphosphate. It carries out the reaction Selective cleavage of Gln-|-Gly bond in the poliovirus polyprotein. In other picornavirus reactions Glu may be substituted for Gln, and Ser or Thr for Gly.. Replication or transcription is subject to high level of random mutations by the nucleotide analog ribavirin. In terms of biological role, forms an icosahedral capsid of pseudo T=3 symmetry with capsid proteins VP2 and VP3. The capsid is 300 Angstroms in diameter, composed of 60 copies of each capsid protein and enclosing the viral positive strand RNA genome. Capsid protein VP1 mainly forms the vertices of the capsid. Capsid protein VP1, together with VP2, interacts with host cell receptor SCARB2 to provide virion attachment to target host cells. This attachment induces virion internalization. After binding to its receptor, the capsid undergoes conformational changes. Capsid protein VP1 N-terminus (that contains an amphipathic alpha-helix) and capsid protein VP4 are externalized. Together, they shape a pore in the host membrane through which viral genome is translocated to host cell cytoplasm. Forms an icosahedral capsid of pseudo T=3 symmetry with capsid proteins VP2 and VP3. The capsid is 300 Angstroms in diameter, composed of 60 copies of each capsid protein and enclosing the viral positive strand RNA genome. Capsid protein VP2, together with VP1, interacts with host cell receptor SCARB2 to provide virion attachment to target host cells. Functionally, forms an icosahedral capsid of pseudo T=3 symmetry with capsid proteins VP2 and VP3. The capsid is 300 Angstroms in diameter, composed of 60 copies of each capsid protein and enclosing the viral positive strand RNA genome. Its function is as follows. Lies on the inner surface of the capsid shell. After binding to the host receptor, the capsid undergoes conformational changes. Capsid protein VP4 is released, Capsid protein VP1 N-terminus is externalized, and together, they shape a pore in the host membrane through which the viral genome is translocated into the host cell cytoplasm. In terms of biological role, component of immature procapsids, which is cleaved into capsid proteins VP4 and VP2 after maturation. Allows the capsid to remain inactive before the maturation step. Cysteine protease that cleaves viral polyprotein and specific host proteins. It is responsible for the autocatalytic cleavage between the P1 and P2 regions, which is the first cleavage occurring in the polyprotein. Also cleaves the host translation initiation factor EIF4G1, in order to shut down the capped cellular mRNA translation. Inhibits the host nucleus-cytoplasm protein and RNA trafficking by cleaving host members of the nuclear pores. Counteracts stress granule formation probably by antagonizing its assembly or promoting its dissassembly. Cleaves and inhibits host IFIH1/MDA5, thereby inhibiting the type-I IFN production and the establishment of the antiviral state. Cleaves and inhibits host MAVS, thereby inhibiting the type-I IFN production and the establishment of the antiviral state. Functionally, plays an essential role in the virus replication cycle by acting as a viroporin. Creates a pore in the host endoplasmic reticulum and as a consequence releases Ca2+ in the cytoplasm of infected cell. In turn, high levels of cytoplasmic calcium may trigger membrane trafficking and transport of viral ER-associated proteins to viroplasms, sites of viral genome replication. Its function is as follows. Induces and associates with structural rearrangements of intracellular membranes. Displays RNA-binding, nucleotide binding and NTPase activities. May play a role in virion morphogenesis and viral RNA encapsidation by interacting with the capsid protein VP3. In terms of biological role, localizes the viral replication complex to the surface of membranous vesicles. Together with protein 3CD binds the Cis-Active RNA Element (CRE) which is involved in RNA synthesis initiation. Acts as a cofactor to stimulate the activity of 3D polymerase, maybe through a nucleid acid chaperone activity. Localizes the viral replication complex to the surface of membranous vesicles. It inhibits host cell endoplasmic reticulum-to-Golgi apparatus transport and causes the disassembly of the Golgi complex, possibly through GBF1 interaction. This would result in depletion of MHC, trail receptors and IFN receptors at the host cell surface. Plays an essential role in viral RNA replication by recruiting ACBD3 and PI4KB at the viral replication sites, thereby allowing the formation of the rearranged membranous structures where viral replication takes place. Functionally, acts as a primer for viral RNA replication and remains covalently bound to viral genomic RNA. VPg is uridylylated prior to priming replication into VPg-pUpU. The oriI viral genomic sequence may act as a template for this. The VPg-pUpU is then used as primer on the genomic RNA poly(A) by the RNA-dependent RNA polymerase to replicate the viral genome. During genome replication, the VPg-RNA linkage is removed by the host TDP2, thereby accelerating replication. During the late stage of the replication cycle, host TDP2 is excluded from sites of viral RNA synthesis and encapsidation, allowing for the generation of progeny virions. Its function is as follows. Involved in the viral replication complex and viral polypeptide maturation. It exhibits protease activity with a specificity and catalytic efficiency that is different from protease 3C. Protein 3CD lacks polymerase activity. Protein 3CD binds to the 5'UTR of the viral genome. In terms of biological role, major viral protease that mediates proteolytic processing of the polyprotein. Cleaves host EIF5B, contributing to host translation shutoff. Also cleaves host PABPC1, contributing to host translation shutoff. Disassembles host cytoplasmic stress granules by cleaving host G3BP1, although this effect is less prononced than the inhibition induced by protease 2A. Cleaves host RIGI and thus contributes to the inhibition of type I interferon production. Cleaves host IRF7 and thus contributes to the inhibition of type I interferon production. Cleaves host HNRNPA1 thereby increasing the translation of apoptosis protease activating factor APAF1, leading to apoptosis of the host cell. Cleaves host NLRP1, triggers host N-glycine-mediated degradation of the autoinhibitory NLRP1 N-terminal fragment. Replicates the viral genomic RNA on the surface of intracellular membranes. May form linear arrays of subunits that propagate along a strong head-to-tail interaction called interface-I. Covalently attaches UMP to a tyrosine of VPg, which is used to prime RNA synthesis. The positive stranded RNA genome is first replicated at virus induced membranous vesicles, creating a dsRNA genomic replication form. This dsRNA is then used as template to synthesize positive stranded RNA genomes. ss(+)RNA genomes are either translated, replicated or encapsidated. This chain is Genome polyprotein, found in Human enterovirus 71 (strain 7423/MS/87) (EV71).